Reading from the N-terminus, the 99-residue chain is Imizoquin biosynthesis cluster protein A (99 aa).

It functions in the pathway secondary metabolite biosynthesis. Part of the gene cluster that mediates the biosynthesis of imizoquins A to D, tripeptide-derived alkaloids that serve a protective role against oxidative stress that are essential for normal germination. ImqB is a canonical three-module NRPS that assembles the tripeptide backbone of the imizoquins via condensation of Trp, Tyr, and Leu-derived precursors. N-methylation by imqF and phenol oxidation by imqC, followed by cyclization via the FAD-dependent oxidase imqH carry out the three-step transformation of L-tyrosine into tetrahydroisoquinoline. Importantly, this sequence requires the presence of a free amine in the tyrosine moiety, indicating that isoquinoline formation occurs prior to peptide bond formation. The imidazolidin-4-one ring of imizoquins could form following additional oxidation of the methyl-derived bridgehead carbon by imqH. Lastly, O-methylation by imqG and leucine hydroxylation by imqE complete biosynthesis of the imizoquins. The protein is Imizoquin biosynthesis cluster protein A of Aspergillus flavus (strain ATCC 200026 / FGSC A1120 / IAM 13836 / NRRL 3357 / JCM 12722 / SRRC 167).